A 243-amino-acid chain; its full sequence is Ubiquinone/menaquinone biosynthesis C-methyltransferase UbiE (243 aa).

S-adenosyl-L-methionine-binding positions include T69, D90, and 116–117; that span reads DA.

It belongs to the class I-like SAM-binding methyltransferase superfamily. MenG/UbiE family.

It carries out the reaction a 2-demethylmenaquinol + S-adenosyl-L-methionine = a menaquinol + S-adenosyl-L-homocysteine + H(+). The catalysed reaction is a 2-methoxy-6-(all-trans-polyprenyl)benzene-1,4-diol + S-adenosyl-L-methionine = a 5-methoxy-2-methyl-3-(all-trans-polyprenyl)benzene-1,4-diol + S-adenosyl-L-homocysteine + H(+). It functions in the pathway quinol/quinone metabolism; menaquinone biosynthesis; menaquinol from 1,4-dihydroxy-2-naphthoate: step 2/2. The protein operates within cofactor biosynthesis; ubiquinone biosynthesis. Methyltransferase required for the conversion of demethylmenaquinol (DMKH2) to menaquinol (MKH2) and the conversion of 2-polyprenyl-6-methoxy-1,4-benzoquinol (DDMQH2) to 2-polyprenyl-3-methyl-6-methoxy-1,4-benzoquinol (DMQH2). The protein is Ubiquinone/menaquinone biosynthesis C-methyltransferase UbiE of Ralstonia nicotianae (strain ATCC BAA-1114 / GMI1000) (Ralstonia solanacearum).